The chain runs to 202 residues: LexA repressor 1 (202 aa).

Residues Arg-28–Lys-48 constitute a DNA-binding region (H-T-H motif). Catalysis depends on for autocatalytic cleavage activity residues Ser-123 and Lys-160.

It belongs to the peptidase S24 family. Homodimer.

The catalysed reaction is Hydrolysis of Ala-|-Gly bond in repressor LexA.. In terms of biological role, represses a number of genes involved in the response to DNA damage (SOS response), including recA and lexA. In the presence of single-stranded DNA, RecA interacts with LexA causing an autocatalytic cleavage which disrupts the DNA-binding part of LexA, leading to derepression of the SOS regulon and eventually DNA repair. This Pseudomonas syringae pv. tomato (strain ATCC BAA-871 / DC3000) protein is LexA repressor 1.